A 238-amino-acid polypeptide reads, in one-letter code: MLNQHSLEEIAEIHNLLGNIKQEYEIGIKPLLIKNSPKLFKNPHTVPKLKKIQINRGLGLAAQNTNLLKKNIEEFEKIAGQKPLITRSKKAIAGFKIREDMELGLSVTLRGEKMYTFLTKLLFFTFAQIRDFRGLSLRSFDKAGNYTLGLKEQLIFPEIDYDDVDQIQGFTINIILEHGSPKYRAESIDKILNGMILFKFLRFPLNDCGYYDKYEAFSDINRNWDKKRHLKRKRWSQE.

The protein belongs to the universal ribosomal protein uL5 family. Part of the 50S ribosomal subunit; contacts the 5S rRNA.

The protein resides in the plastid. The protein localises to the chloroplast. Binds 5S rRNA, forms part of the central protuberance of the 50S subunit. The chain is Large ribosomal subunit protein uL5c (rpl5) from Phaeodactylum tricornutum (strain CCAP 1055/1).